Reading from the N-terminus, the 288-residue chain is ATP synthase subunit a (288 aa).

6 consecutive transmembrane segments (helical) span residues 47–67 (LDSM…FWLV), 104–124 (LIAP…LMDL), 157–177 (DPNI…YYSI), 199–219 (PIAK…TLIA), 237–257 (LIFV…SVPW), and 258–278 (AIFH…LTIV).

Belongs to the ATPase A chain family. F-type ATPases have 2 components, CF(1) - the catalytic core - and CF(0) - the membrane proton channel. CF(1) has five subunits: alpha(3), beta(3), gamma(1), delta(1), epsilon(1). CF(0) has three main subunits: a(1), b(2) and c(9-12). The alpha and beta chains form an alternating ring which encloses part of the gamma chain. CF(1) is attached to CF(0) by a central stalk formed by the gamma and epsilon chains, while a peripheral stalk is formed by the delta and b chains.

It localises to the cell inner membrane. Functionally, key component of the proton channel; it plays a direct role in the translocation of protons across the membrane. The polypeptide is ATP synthase subunit a (Psychrobacter sp. (strain PRwf-1)).